The primary structure comprises 227 residues: Cytochrome c oxidase subunit 2 (227 aa).

Residues Met-1–Ser-14 lie on the Mitochondrial intermembrane side of the membrane. A helical membrane pass occupies residues Pro-15–Met-45. Over Leu-46–Gln-59 the chain is Mitochondrial matrix. Residues Gly-60–Met-87 traverse the membrane as a helical segment. Residues Asp-88 to Ile-227 are Mitochondrial intermembrane-facing. 6 residues coordinate Cu cation: His-161, Cys-196, Glu-198, Cys-200, His-204, and Met-207. Residue Glu-198 participates in Mg(2+) binding.

It belongs to the cytochrome c oxidase subunit 2 family. Component of the cytochrome c oxidase (complex IV, CIV), a multisubunit enzyme composed of 14 subunits. The complex is composed of a catalytic core of 3 subunits MT-CO1, MT-CO2 and MT-CO3, encoded in the mitochondrial DNA, and 11 supernumerary subunits COX4I, COX5A, COX5B, COX6A, COX6B, COX6C, COX7A, COX7B, COX7C, COX8 and NDUFA4, which are encoded in the nuclear genome. The complex exists as a monomer or a dimer and forms supercomplexes (SCs) in the inner mitochondrial membrane with NADH-ubiquinone oxidoreductase (complex I, CI) and ubiquinol-cytochrome c oxidoreductase (cytochrome b-c1 complex, complex III, CIII), resulting in different assemblies (supercomplex SCI(1)III(2)IV(1) and megacomplex MCI(2)III(2)IV(2)). Found in a complex with TMEM177, COA6, COX18, COX20, SCO1 and SCO2. Interacts with TMEM177 in a COX20-dependent manner. Interacts with COX20. Interacts with COX16. Cu cation serves as cofactor.

Its subcellular location is the mitochondrion inner membrane. It carries out the reaction 4 Fe(II)-[cytochrome c] + O2 + 8 H(+)(in) = 4 Fe(III)-[cytochrome c] + 2 H2O + 4 H(+)(out). Its function is as follows. Component of the cytochrome c oxidase, the last enzyme in the mitochondrial electron transport chain which drives oxidative phosphorylation. The respiratory chain contains 3 multisubunit complexes succinate dehydrogenase (complex II, CII), ubiquinol-cytochrome c oxidoreductase (cytochrome b-c1 complex, complex III, CIII) and cytochrome c oxidase (complex IV, CIV), that cooperate to transfer electrons derived from NADH and succinate to molecular oxygen, creating an electrochemical gradient over the inner membrane that drives transmembrane transport and the ATP synthase. Cytochrome c oxidase is the component of the respiratory chain that catalyzes the reduction of oxygen to water. Electrons originating from reduced cytochrome c in the intermembrane space (IMS) are transferred via the dinuclear copper A center (CU(A)) of subunit 2 and heme A of subunit 1 to the active site in subunit 1, a binuclear center (BNC) formed by heme A3 and copper B (CU(B)). The BNC reduces molecular oxygen to 2 water molecules using 4 electrons from cytochrome c in the IMS and 4 protons from the mitochondrial matrix. The polypeptide is Cytochrome c oxidase subunit 2 (MT-CO2) (Acomys ignitus (Fiery spiny mouse)).